The sequence spans 138 residues: Abscisic stress-ripening protein 5 (138 aa).

Positions 1–13 (MAEEKHHHHLFHH) are enriched in basic residues. Disordered regions lie at residues 1–27 (MAEE…DSYG) and 106–138 (GAGG…HLFG).

It belongs to the abscisic acid and water stress-induced protein family.

It localises to the nucleus. The protein resides in the cytoplasm. Functionally, involved in tolerance to aluminum. Regulates the expression of different genes that collectively contribute to the protection of the cell in response to aluminum stress. The chain is Abscisic stress-ripening protein 5 from Oryza sativa subsp. indica (Rice).